The chain runs to 598 residues: Phospholipase B-like protein G (598 aa).

An N-terminal signal peptide occupies residues 1–24 (MIKSYYLFFIILIFLIFINNFILC). Residues Asn-50, Asn-98, Asn-173, Asn-341, Asn-368, Asn-450, Asn-480, Asn-526, and Asn-576 are each glycosylated (N-linked (GlcNAc...) asparagine).

This sequence belongs to the phospholipase B-like family.

Its subcellular location is the secreted. Probable phospholipase. The chain is Phospholipase B-like protein G (plbG) from Dictyostelium discoideum (Social amoeba).